Reading from the N-terminus, the 453-residue chain is Homogentisate 1,2-dioxygenase (453 aa).

Residues 1-12 (MLEKAERQRKAA) show a composition bias toward basic and acidic residues. The tract at residues 1–43 (MLEKAERQRKAAPDQQRSAGYMPGFGNDFETESLPGSLPQGQN) is disordered. Residue histidine 306 is the Proton acceptor of the active site. Fe cation is bound by residues histidine 349 and glutamate 355. Homogentisate is bound by residues tyrosine 364 and histidine 385. Residue histidine 385 participates in Fe cation binding.

This sequence belongs to the homogentisate dioxygenase family. In terms of assembly, hexamer; dimer of trimers. Fe cation is required as a cofactor.

The catalysed reaction is homogentisate + O2 = 4-maleylacetoacetate + H(+). It functions in the pathway amino-acid degradation; L-phenylalanine degradation; acetoacetate and fumarate from L-phenylalanine: step 4/6. Functionally, involved in the catabolism of homogentisate (2,5-dihydroxyphenylacetate or 2,5-OH-PhAc), a central intermediate in the degradation of phenylalanine and tyrosine. Catalyzes the oxidative ring cleavage of the aromatic ring of homogentisate to yield maleylacetoacetate. In Sinorhizobium medicae (strain WSM419) (Ensifer medicae), this protein is Homogentisate 1,2-dioxygenase.